A 101-amino-acid polypeptide reads, in one-letter code: Small ribosomal subunit protein bS18c (101 aa).

Belongs to the bacterial ribosomal protein bS18 family. Part of the 30S ribosomal subunit.

It localises to the plastid. The protein resides in the chloroplast. This chain is Small ribosomal subunit protein bS18c, found in Nymphaea alba (White water-lily).